We begin with the raw amino-acid sequence, 264 residues long: MKIKVGVIGCSGRMGKRILNELITNTQVEIAGAVARLGSKYIGSDIGSAVYHSSNLGIKVTSSISDVFESSDVVIDFTTKECMLACLKAAMKFKTPLVSGTTGIESINLKKYAAKIPILWSANMSVGVNVLLKLVKKAAEFLDNEYDVEIWEMHHNLKKDSPSGTAMEFGKAIANALKVDFQPYQHSHNSSNIREKGKIGFAVSRGGGVVGDHSVMFINSDERIELNHKAIDRTTFARGAVRAAIWLYENKRETPGLYSMQDVI.

9-14 is an NAD(+) binding site; it reads GCSGRM. R36 contacts NADP(+). NAD(+)-binding positions include 100 to 102 and 121 to 124; these read GTT and SANM. H154 serves as the catalytic Proton donor/acceptor. H155 contributes to the (S)-2,3,4,5-tetrahydrodipicolinate binding site. Residue K158 is the Proton donor of the active site. 164-165 is a (S)-2,3,4,5-tetrahydrodipicolinate binding site; sequence GT.

It belongs to the DapB family.

It localises to the cytoplasm. The enzyme catalyses (S)-2,3,4,5-tetrahydrodipicolinate + NAD(+) + H2O = (2S,4S)-4-hydroxy-2,3,4,5-tetrahydrodipicolinate + NADH + H(+). It catalyses the reaction (S)-2,3,4,5-tetrahydrodipicolinate + NADP(+) + H2O = (2S,4S)-4-hydroxy-2,3,4,5-tetrahydrodipicolinate + NADPH + H(+). It participates in amino-acid biosynthesis; L-lysine biosynthesis via DAP pathway; (S)-tetrahydrodipicolinate from L-aspartate: step 4/4. Its function is as follows. Catalyzes the conversion of 4-hydroxy-tetrahydrodipicolinate (HTPA) to tetrahydrodipicolinate. The chain is 4-hydroxy-tetrahydrodipicolinate reductase from Wolbachia sp. subsp. Brugia malayi (strain TRS).